A 500-amino-acid chain; its full sequence is Lysine--tRNA ligase (500 aa).

Residues Glu407 and Glu414 each coordinate Mg(2+).

This sequence belongs to the class-II aminoacyl-tRNA synthetase family. Homodimer. Mg(2+) is required as a cofactor.

The protein localises to the cytoplasm. The catalysed reaction is tRNA(Lys) + L-lysine + ATP = L-lysyl-tRNA(Lys) + AMP + diphosphate. This chain is Lysine--tRNA ligase, found in Azobacteroides pseudotrichonymphae genomovar. CFP2.